Reading from the N-terminus, the 364-residue chain is Alanine racemase (364 aa).

Catalysis depends on Lys34, which acts as the Proton acceptor; specific for D-alanine. Position 34 is an N6-(pyridoxal phosphate)lysine (Lys34). A substrate-binding site is contributed by Arg129. Tyr259 acts as the Proton acceptor; specific for L-alanine in catalysis. Met307 is a binding site for substrate.

It belongs to the alanine racemase family. It depends on pyridoxal 5'-phosphate as a cofactor.

The catalysed reaction is L-alanine = D-alanine. It participates in amino-acid biosynthesis; D-alanine biosynthesis; D-alanine from L-alanine: step 1/1. Functionally, catalyzes the interconversion of L-alanine and D-alanine. May also act on other amino acids. This Coxiella burnetii (strain CbuK_Q154) (Coxiella burnetii (strain Q154)) protein is Alanine racemase (alr).